The sequence spans 124 residues: Snake venom vascular endothelial growth factor toxin apiscin (124 aa).

The N-terminal stretch at 1-24 (MAAYLLAVAILFCIQGWPSGTVQG) is a signal peptide. Residue Gln25 is modified to Pyrrolidone carboxylic acid. 3 disulfides stabilise this stretch: Cys38-Cys80, Cys69-Cys115, and Cys73-Cys117.

The protein belongs to the PDGF/VEGF growth factor family. Snake venom VEGF subfamily. As to quaternary structure, homodimer; disulfide-linked. Interacts with VEGF receptor-1 (FLT1) with a high affinity, whereas it binds to VEGF receptor-2 (KDR) with a low affinity. Does not bind VEGF receptor-3 (FLT4). As to expression, expressed by the venom gland.

It is found in the secreted. Snake venom VEGFs that may contribute to venom dispersion and prey subjugation by inducing vascular permeability and hypotension. This protein induces an increase in capillary permeability after intradermal injection, as well as a drastic hypotensive effect after intravenous injection. The hypotension is mediated by nitric oxide (NO), which is produced by VEGF-activated endothelium NO synthase. Also induces angiogenesis in vitro. Like other crotalid VEGFs, this protein interacts with VEGF receptor-1 (FLT1) with a high affinity, whereas it binds to VEGF receptor-2 (KDR) with a low affinity. The protein is Snake venom vascular endothelial growth factor toxin apiscin of Agkistrodon piscivorus piscivorus (Eastern cottonmouth).